We begin with the raw amino-acid sequence, 257 residues long: Imidazole glycerol phosphate synthase subunit HisF (257 aa).

Active-site residues include Asp11 and Asp130.

It belongs to the HisA/HisF family. As to quaternary structure, heterodimer of HisH and HisF.

The protein resides in the cytoplasm. It carries out the reaction 5-[(5-phospho-1-deoxy-D-ribulos-1-ylimino)methylamino]-1-(5-phospho-beta-D-ribosyl)imidazole-4-carboxamide + L-glutamine = D-erythro-1-(imidazol-4-yl)glycerol 3-phosphate + 5-amino-1-(5-phospho-beta-D-ribosyl)imidazole-4-carboxamide + L-glutamate + H(+). It functions in the pathway amino-acid biosynthesis; L-histidine biosynthesis; L-histidine from 5-phospho-alpha-D-ribose 1-diphosphate: step 5/9. IGPS catalyzes the conversion of PRFAR and glutamine to IGP, AICAR and glutamate. The HisF subunit catalyzes the cyclization activity that produces IGP and AICAR from PRFAR using the ammonia provided by the HisH subunit. This is Imidazole glycerol phosphate synthase subunit HisF from Aliivibrio fischeri (strain MJ11) (Vibrio fischeri).